Reading from the N-terminus, the 265-residue chain is Insulin-like growth factor-binding protein 5 (265 aa).

A signal peptide spans 1 to 21 (MEMLLPMCLLLVSLCLGQCQA). Residues 24-104 (SFVHCEPCDD…LHGRGVCLNL (81 aa)) form the IGFBP N-terminal domain. Disulfide bonds link Cys-28/Cys-54, Cys-31/Cys-56, Cys-39/Cys-57, Cys-46/Cys-60, Cys-68/Cys-81, and Cys-75/Cys-101. Residues 111–121 (SKIDRESREED) are compositionally biased toward basic and acidic residues. Residues 111–137 (SKIDRESREEDPTTSETEDIYQSKHRG) are disordered. One can recognise a Thyroglobulin type-1 domain in the interval 182-256 (MGPCRRQVET…IDYVNGDLQC (75 aa)). 3 cysteine pairs are disulfide-bonded: Cys-185–Cys-212, Cys-223–Cys-234, and Cys-236–Cys-256.

The protein localises to the secreted. In terms of biological role, IGF-binding proteins prolong the half-life of the IGFs and have been shown to either inhibit or stimulate the growth promoting effects of the IGFs on cell culture. They alter the interaction of IGFs with their cell surface receptors. Promotes anterior neural development by stimulating insulin growth factor (IGF) signaling via IGF receptors. This chain is Insulin-like growth factor-binding protein 5, found in Xenopus laevis (African clawed frog).